The chain runs to 95 residues: Phosphoribosyl-ATP pyrophosphatase (95 aa).

It belongs to the PRA-PH family.

Its subcellular location is the cytoplasm. It carries out the reaction 1-(5-phospho-beta-D-ribosyl)-ATP + H2O = 1-(5-phospho-beta-D-ribosyl)-5'-AMP + diphosphate + H(+). It functions in the pathway amino-acid biosynthesis; L-histidine biosynthesis; L-histidine from 5-phospho-alpha-D-ribose 1-diphosphate: step 2/9. This is Phosphoribosyl-ATP pyrophosphatase from Methanosphaera stadtmanae (strain ATCC 43021 / DSM 3091 / JCM 11832 / MCB-3).